A 324-amino-acid chain; its full sequence is Arginase (324 aa).

Mn(2+) is bound by residues H115, D142, H144, and D146. Residues 144-148, 155-157, and D196 each bind substrate; these read HTDLH and SGN. D244 and D246 together coordinate Mn(2+). Substrate contacts are provided by T258 and E289.

Belongs to the arginase family. As to quaternary structure, homohexamer. Mn(2+) is required as a cofactor.

It catalyses the reaction L-arginine + H2O = urea + L-ornithine. It functions in the pathway nitrogen metabolism; urea cycle; L-ornithine and urea from L-arginine: step 1/1. This chain is Arginase (arcA), found in Agrobacterium fabrum (strain C58 / ATCC 33970) (Agrobacterium tumefaciens (strain C58)).